A 33-amino-acid chain; its full sequence is Brevinin 2AV (33 aa).

Cys27 and Cys33 are disulfide-bonded.

Expressed by the skin glands.

The protein localises to the secreted. Has antibacterial activity. The sequence is that of Brevinin 2AV from Rana arvalis (Moor frog).